The chain runs to 90 residues: MSSTSQKHRDFVAEPMGEKSVQCLAGIGEALGHRLEEKGFDKAYVVLGQFLVLKKDEELFKEWLKDICSANAKQSRDCYGCLKEWCDAFL.

The protein belongs to the BAF family. As to quaternary structure, homodimer. Interacts with nemp1a and nemp1b. Phosphorylated during S and M phases.

The protein resides in the nucleus. It is found in the chromosome. The protein localises to the nucleus envelope. Its subcellular location is the cytoplasm. Non-specific DNA-binding protein that plays key roles in mitotic nuclear reassembly, chromatin organization, DNA damage response, gene expression and intrinsic immunity against foreign DNA. Contains two non-specific double-stranded DNA (dsDNA)-binding sites which promote DNA cross-bridging. Plays a key role in nuclear membrane reformation at the end of mitosis by driving formation of a single nucleus in a spindle-independent manner. Transiently cross-bridges anaphase chromosomes via its ability to bridge distant DNA sites, leading to the formation of a dense chromatin network at the chromosome ensemble surface that limits membranes to the surface. Also acts as a negative regulator of innate immune activation by restricting CGAS activity toward self-DNA upon acute loss of nuclear membrane integrity. Outcompetes CGAS for DNA-binding, thereby preventing CGAS activation and subsequent damaging autoinflammatory responses. Also involved in DNA damage response; acts by inhibiting the ADP-ribosyltransferase activity of PARP1. Involved in the recognition of exogenous dsDNA in the cytosol: associates with exogenous dsDNA immediately after its appearance in the cytosol at endosome breakdown and is required to avoid autophagy. This is Barrier-to-autointegration factor A (banf1-a) from Xenopus laevis (African clawed frog).